Here is a 222-residue protein sequence, read N- to C-terminus: 26S proteasome non-ATPase regulatory subunit 9 (222 aa).

In terms of domain architecture, PDZ spans 108-194 (QARDMAEARE…KPLNVMVIRR (87 aa)). Ser-128 carries the post-translational modification Phosphoserine.

It belongs to the proteasome subunit p27 family. Interacts with PSMC3. Part of a transient complex (modulator) containing PSMD9, PSMC6 and PSMC3 formed during the assembly of the 26S proteasome.

Functionally, acts as a chaperone during the assembly of the 26S proteasome, specifically of the base subcomplex of the PA700/19S regulatory complex (RC). During the base subcomplex assembly is part of an intermediate PSMD9:PSMC6:PSMC3 module, also known as modulator trimer complex; PSMD9 is released during the further base assembly process. This is 26S proteasome non-ATPase regulatory subunit 9 (Psmd9) from Rattus norvegicus (Rat).